The chain runs to 1059 residues: RNA-binding protein 26 (1059 aa).

2 stretches are compositionally biased toward basic and acidic residues: residues 98–114 (EKEI…EKEK) and 130–147 (RHKD…DRES). Residues 98–275 (EKEIKKDEVN…PVDNSYASGS (178 aa)) form a disordered region. A compositionally biased stretch (polar residues) spans 172-182 (LNSNKVQNAKN). A compositionally biased stretch (basic and acidic residues) spans 184–213 (RSRDDRKRDDRFRKREYDRNVPRRDSYRDR). Residues 214–231 (YNRRRGRSRSYSRSRSRS) show a composition bias toward basic residues. A compositionally biased stretch (basic and acidic residues) spans 232 to 266 (WSKERQRDRDRSRSRTRSRDKDSGKPKFDLDRPDP). The segment at 327 to 355 (QMQKKRCRDYDEKGFCMRGDMCPFDHGSD) adopts a C3H1-type zinc-finger fold. The span at 375–428 (PVLEGPPPPGLPPPPSLLTPPPVNLQPPPVPPPGPLPPSLPPVTGPPPPLPPLQ) shows a compositional bias: pro residues. Positions 375-443 (PVLEGPPPPG…APPNSATSSV (69 aa)) are disordered. Low complexity predominate over residues 434-443 (APPNSATSSV). Residues 581 to 655 (TKLELRRIPP…RFIRMYWHRE (75 aa)) enclose the RRM 1 domain. Positions 771–873 (GDAQKKKQEA…LLDTELDLYN (103 aa)) form a coiled coil. An RRM 2 domain is found at 942–1011 (RALKISGFTE…QDLKLAWNKP (70 aa)). Positions 1010–1059 (KPVPNASSTEVEDADQEEEEFHEDSIVDDSLLQDDDEEEEDDNESRSWRR) are disordered. Composition is skewed to acidic residues over residues 1019–1031 (EVED…EEFH) and 1040–1052 (LLQD…EDDN).

In terms of biological role, may be involved in the turnover of nuclear polyadenylated (pA+) RNA. This is RNA-binding protein 26 from Xenopus laevis (African clawed frog).